The chain runs to 203 residues: Glycerol-3-phosphate acyltransferase (203 aa).

A run of 5 helical transmembrane segments spans residues 5-25 (VLGL…FGVV), 55-75 (KLGI…ILVA), 88-108 (FTVL…WLGF), 114-134 (VATG…AGAV), and 162-182 (FVAH…AALI).

It belongs to the PlsY family. Probably interacts with PlsX.

It localises to the cell inner membrane. It catalyses the reaction an acyl phosphate + sn-glycerol 3-phosphate = a 1-acyl-sn-glycero-3-phosphate + phosphate. It participates in lipid metabolism; phospholipid metabolism. Catalyzes the transfer of an acyl group from acyl-phosphate (acyl-PO(4)) to glycerol-3-phosphate (G3P) to form lysophosphatidic acid (LPA). This enzyme utilizes acyl-phosphate as fatty acyl donor, but not acyl-CoA or acyl-ACP. The protein is Glycerol-3-phosphate acyltransferase of Anaeromyxobacter sp. (strain Fw109-5).